Here is a 290-residue protein sequence, read N- to C-terminus: tRNA (adenine(58)-N(1))-methyltransferase catalytic subunit TRMT61A (290 aa).

The residue at position 2 (Ser2) is an N-acetylserine. 5 substrate regions span residues 20–22 (LGH), 35–42 (QTQTRHGV), 64–65 (GW), 85–89 (QILYS), and 110–117 (SGTGSGSV). Residues Leu87, 114-116 (SGS), Glu135, Arg140, 163-164 (DV), and Asp181 each bind S-adenosyl-L-methionine. Substrate regions lie at residues 180–183 (LDIP) and 205–212 (SFSPCIEQ). Thr279 serves as a coordination point for substrate.

Belongs to the class I-like SAM-binding methyltransferase superfamily. TRM61 family. Heterotetramer; composed of two copies of TRMT6 and two copies of TRMT61A.

Its subcellular location is the nucleus. The catalysed reaction is adenosine(58) in tRNA + S-adenosyl-L-methionine = N(1)-methyladenosine(58) in tRNA + S-adenosyl-L-homocysteine + H(+). It carries out the reaction an adenosine in mRNA + S-adenosyl-L-methionine = an N(1)-methyladenosine in mRNA + S-adenosyl-L-homocysteine + H(+). Its function is as follows. Catalytic subunit of tRNA (adenine-N(1)-)-methyltransferase, which catalyzes the formation of N(1)-methyladenine at position 58 (m1A58) in initiator methionyl-tRNA. Catalytic subunit of mRNA N(1)-methyltransferase complex, which mediates methylation of adenosine residues at the N(1) position of a small subset of mRNAs: N(1) methylation takes place in tRNA T-loop-like structures of mRNAs and is only present at low stoichiometries. The protein is tRNA (adenine(58)-N(1))-methyltransferase catalytic subunit TRMT61A (Trmt61a) of Rattus norvegicus (Rat).